Here is a 166-residue protein sequence, read N- to C-terminus: MFPMVTEFMNYGQQTVRAARYIGQGFMITLSHANRLPVTIQYPYEKLITSERFRGRIHFEFDKCIACEVCVRVCPIDLPVVDWKLETDIRKKRLLNYSIDFGICIFCGNCVEYCPTNCLSMTEEYELSTYDRHELNYNQIALGRLPMSIIDNYTIRTILNLPEIKT.

2 4Fe-4S ferredoxin-type domains span residues 55–84 and 95–124; these read GRIHFEFDKCIACEVCVRVCPIDLPVVDWK and LNYSIDFGICIFCGNCVEYCPTNCLSMTEE. [4Fe-4S] cluster contacts are provided by cysteine 64, cysteine 67, cysteine 70, cysteine 74, cysteine 104, cysteine 107, cysteine 110, and cysteine 114.

This sequence belongs to the complex I 23 kDa subunit family. In terms of assembly, NDH is composed of at least 16 different subunits, 5 of which are encoded in the nucleus. The cofactor is [4Fe-4S] cluster.

The protein resides in the plastid. It localises to the chloroplast thylakoid membrane. It catalyses the reaction a plastoquinone + NADH + (n+1) H(+)(in) = a plastoquinol + NAD(+) + n H(+)(out). The catalysed reaction is a plastoquinone + NADPH + (n+1) H(+)(in) = a plastoquinol + NADP(+) + n H(+)(out). Functionally, NDH shuttles electrons from NAD(P)H:plastoquinone, via FMN and iron-sulfur (Fe-S) centers, to quinones in the photosynthetic chain and possibly in a chloroplast respiratory chain. The immediate electron acceptor for the enzyme in this species is believed to be plastoquinone. Couples the redox reaction to proton translocation, and thus conserves the redox energy in a proton gradient. In Guardiola tulocarpus, this protein is NAD(P)H-quinone oxidoreductase subunit I, chloroplastic.